Reading from the N-terminus, the 479-residue chain is ATP synthase subunit beta (479 aa).

153–160 (GGAGVGKT) is a binding site for ATP.

It belongs to the ATPase alpha/beta chains family. In terms of assembly, F-type ATPases have 2 components, CF(1) - the catalytic core - and CF(0) - the membrane proton channel. CF(1) has five subunits: alpha(3), beta(3), gamma(1), delta(1), epsilon(1). CF(0) has three main subunits: a(1), b(2) and c(9-12). The alpha and beta chains form an alternating ring which encloses part of the gamma chain. CF(1) is attached to CF(0) by a central stalk formed by the gamma and epsilon chains, while a peripheral stalk is formed by the delta and b chains.

The protein resides in the cell membrane. The enzyme catalyses ATP + H2O + 4 H(+)(in) = ADP + phosphate + 5 H(+)(out). In terms of biological role, produces ATP from ADP in the presence of a proton gradient across the membrane. The catalytic sites are hosted primarily by the beta subunits. This Lactobacillus delbrueckii subsp. bulgaricus (strain ATCC BAA-365 / Lb-18) protein is ATP synthase subunit beta.